The following is a 205-amino-acid chain: Guanylate kinase (205 aa).

In terms of domain architecture, Guanylate kinase-like spans 3–181 (GSLYIISAPS…ALSELHSIFL (179 aa)). ATP is bound at residue 10 to 17 (APSGAGKT).

The protein belongs to the guanylate kinase family.

It is found in the cytoplasm. The catalysed reaction is GMP + ATP = GDP + ADP. Functionally, essential for recycling GMP and indirectly, cGMP. This chain is Guanylate kinase, found in Hydrogenovibrio crunogenus (strain DSM 25203 / XCL-2) (Thiomicrospira crunogena).